The chain runs to 419 residues: Double-stranded RNA-binding protein 1 (419 aa).

DRBM domains follow at residues 15–84 (VFKS…ELAK) and 101–170 (LCKN…AIQS). Positions 207 to 222 (KARKAQFKKKAQKGKR) match the Bipartite nuclear localization motif. 6 repeat units span residues 247–274 (EKIE…SVET), 275–302 (EKIE…SVET), 303–330 (EKIE…SVET), 331–358 (EKIE…SVET), 359–386 (EKIE…SVET), and 387–414 (EKIE…SVET). The interval 247-414 (EKIETTPNLE…KEAAFGSVET (168 aa)) is 6 X 28 AA repeats of E-K-I-E-T-T-P-N-L-E-[PS]-[PS]-S-C-M-[NS]-G-L-K-E-A-A-F-G-S-V-E-T.

As to quaternary structure, homodimer. Heterodimer with DRB2, DRB4 or DRB5. Interacts with SE and DCL1. Interacts with RCF3, RS40 and RS41. In terms of tissue distribution, expressed in rosette and cauline leaves, stems, roots, flowers and siliques.

It localises to the nucleus. Its subcellular location is the nucleus speckle. In terms of biological role, double-stranded RNA-binding protein involved in RNA-mediated post-transcriptional gene silencing (PTGS). Functions in the microRNAs (miRNAs) biogenesis by assisting DICER-LIKE 1 (DCL1) in the accurate processing from primary miRNAs (pri-miRNAs) to miRNAs in the nucleus. Forms a complex with SERRATE (SE) and DCL1 to promote accurate processing of pri-miRNAs by DCL1. Binds and assist DCL1 for accurate processing of precursor miRNAs (pre-miRNA). Indirectly involved in the production of trans-acting small interfering RNAs (ta-siRNAs) derived from the TAS1, TAS2 or TAS3 endogenous transcripts by participating in the production of their initiating miRNAs. Involved with argonaute 1 (AGO1) in the guide strand selection from miRNA duplexes, presumably by directional loading of the miRNA duplex (guide stand and passenger strand) onto the RNA-induced silencing complex (RISC) for passenger strand degradation. Does not participate in sense transgene-induced post-transcriptional gene silencing (S-PTGS). Involved in several plant development aspects and response to hormones through its role in miRNAs processing. This chain is Double-stranded RNA-binding protein 1 (DRB1), found in Arabidopsis thaliana (Mouse-ear cress).